Here is a 231-residue protein sequence, read N- to C-terminus: MPIPNNPGAGENAFDPVFVKDDDGYDLDSFMIPAHYKKYLTKVLVPNGVIKNRIEKLAYDIKKVYNNEEFHILCLLKGSRGFFTALLKHLSRIHNYSAVEMSKPLFGEHYVRVKSYCNDQSTGTLEIVSEDLSCLKGKHVLIVEDIIDTGKTLVKFCEYLKKFEIKTVAIACLFIKRTPLWNGFKADFVGFSIPDHFVVGYSLDYNEIFRDLDHCCLVNDEGKKKYKATSL.

Residues Lys-77, 144–152 (EDIIDTGKT), Lys-176, and Asp-204 each bind GMP. Catalysis depends on Asp-148, which acts as the Proton acceptor. Asp-204 lines the Mg(2+) pocket.

Belongs to the purine/pyrimidine phosphoribosyltransferase family. Homotetramer. Requires Mg(2+) as cofactor.

The protein resides in the cytoplasm. It catalyses the reaction IMP + diphosphate = hypoxanthine + 5-phospho-alpha-D-ribose 1-diphosphate. It carries out the reaction GMP + diphosphate = guanine + 5-phospho-alpha-D-ribose 1-diphosphate. The enzyme catalyses XMP + diphosphate = xanthine + 5-phospho-alpha-D-ribose 1-diphosphate. Its pathway is purine metabolism; GMP biosynthesis via salvage pathway; GMP from guanine: step 1/1. It functions in the pathway purine metabolism; IMP biosynthesis via salvage pathway; IMP from hypoxanthine: step 1/1. The protein operates within purine metabolism; XMP biosynthesis via salvage pathway; XMP from xanthine: step 1/1. Functionally, catalyzes the transfer of a ribosyl phosphate group from 5-phosphoribose 1-diphosphate to the N(9) of hypoxanthine, guanine or xanthine, leading to IMP, GMP and XMP, respectively. Plays a central role in the generation of purine nucleotides through the purine salvage pathway. In Plasmodium falciparum (isolate K1 / Thailand), this protein is Hypoxanthine-guanine-xanthine phosphoribosyltransferase (LACZ).